Reading from the N-terminus, the 1883-residue chain is DDB1- and CUL4-associated factor homolog 1 (1883 aa).

Disordered stretches follow at residues 1–47 (MDGQ…QSVE) and 309–340 (KPGD…HEGA). The span at 37–47 (NPEEGEEQSVE) shows a compositional bias: acidic residues. Residues 309–322 (KPGDDNSVRDDPSR) show a composition bias toward basic and acidic residues. The span at 323-334 (HRLNRSKSRGRG) shows a compositional bias: basic residues. Residue Ser-349 is modified to Phosphoserine. Residues 882–924 (NKPPLAQNHQPVPGQATTRPSTDVAVGTQSTGNAPQTPVAPAS) form a disordered region. Over residues 888 to 917 (QNHQPVPGQATTRPSTDVAVGTQSTGNAPQ) the composition is skewed to polar residues. Residues 1087-1119 (DSKELLLLIHEHLQASGLGDTASALLKEAQLTP) form the LisH domain. Disordered regions lie at residues 1157 to 1202 (TSKP…QWPS), 1214 to 1260 (PKIN…ALPQ), and 1310 to 1377 (SELR…NPER). Residues 1238 to 1251 (LTFSPSFSSQSRKQ) show a composition bias toward low complexity. The segment covering 1310-1329 (SELRDSSVPGKRIDLGERRN) has biased composition (basic and acidic residues). A compositionally biased stretch (polar residues) spans 1330–1362 (STFADGSGLQTPASALDANQSGSSRLGQMTPAS). WD repeat units follow at residues 1464 to 1503 (DETA…MLES), 1506 to 1546 (GHQA…GGPR), 1548 to 1586 (SFDG…TCSP), 1587 to 1626 (CQKL…RRIP), and 1633 to 1671 (DQFT…VPSL). 2 consecutive short sequence motifs (DWD box) follow at residues 1619 to 1626 (VLWDRRIP) and 1655 to 1662 (EIWDMRTF). A disordered region spans residues 1763-1883 (YEIGRRRPTD…DDYRDNIRSS (121 aa)). Composition is skewed to acidic residues over residues 1773-1796 (DDSD…EDDL) and 1808-1864 (DSGD…DGEM).

This sequence belongs to the VPRBP/DCAF1 family. As to quaternary structure, component of the CUL4-RBX1-DDB1-DCAF1 E3 ubiquitin-protein ligase complex. Interacts with DDB1A through its DWD motifs. Ubiquitous but predominantly expressed in the inflorescence and roots.

It localises to the nucleus. Its pathway is protein modification; protein ubiquitination. Component of the CUL4-RBX1-DDB1-DCAF1 E3 ubiquitin-protein ligase complex, DCAF1 may function as the substrate recognition module within this complex. Appears to be required for plant embryogenesis and to affect several other developmental processes including leaf, shoot, and flower development. In Arabidopsis thaliana (Mouse-ear cress), this protein is DDB1- and CUL4-associated factor homolog 1 (DCAF1).